The chain runs to 611 residues: RAC serine/threonine-protein kinase (611 aa).

The span at 14–25 (VVASAPAPGSAS) shows a compositional bias: low complexity. Disordered stretches follow at residues 14–33 (VVAS…SPTT) and 45–88 (QSTH…NTTF). A Phosphoserine modification is found at Ser-30. The 106-residue stretch at 106–211 (QVVKEGWLMK…WTEAIRNVSS (106 aa)) folds into the PH domain. A Protein kinase domain is found at 266-523 (FEFLKVLGKG…VKEIQAHPFF (258 aa)). ATP is bound by residues 272–280 (LGKGTFGKV) and Lys-295. Catalysis depends on Asp-389, which acts as the Proton acceptor. An AGC-kinase C-terminal domain is found at 524 to 597 (ASINWTDLVL…QGDMASTLGT (74 aa)). At Ser-586 the chain carries Phosphoserine.

Belongs to the protein kinase superfamily. AGC Ser/Thr protein kinase family. RAC subfamily. Interacts with trbl. Post-translationally, phosphorylated and activated by Pk61C/PDK1. Phosphorylated on Ser-586 by the TORC2 complex. In terms of tissue distribution, ubiquitously expressed. Present in ovary, where it is concentrated at the basal side of follicle cells.

The protein localises to the cytoplasm. The protein resides in the cytosol. It is found in the cell membrane. The enzyme catalyses L-seryl-[protein] + ATP = O-phospho-L-seryl-[protein] + ADP + H(+). The catalysed reaction is L-threonyl-[protein] + ATP = O-phospho-L-threonyl-[protein] + ADP + H(+). In terms of biological role, serine/threonine kinase involved in various developmental processes. During early embryogenesis, acts as a survival protein. During mid-embryogenesis, phosphorylates and activates trh, a transcription factor required for tracheal cell fate determination. Also regulates tracheal cell migration. Later in development, acts downstream of PI3K and Pk61C/PDK1 in the insulin receptor transduction pathway which regulates cell growth and organ size, by phosphorylating and antagonizing FOXO transcription factor. Controls follicle cell size during oogenesis. May also stimulate cell growth by phosphorylating Gig/Tsc2 and inactivating the Tsc complex. Dephosphorylation of 'Ser-586' by Phlpp triggers apoptosis and suppression of tumor growth. The chain is RAC serine/threonine-protein kinase from Drosophila melanogaster (Fruit fly).